The following is a 493-amino-acid chain: MTTVRTRIAPSPTGDPHVGTAYIALFNYCFAKQHGGEFILRIEDTDQLRSTRESEQQIFDALRWLGIEWNEGPDVGGPHGPYRQSERGEIYAKYAKELVDAGHAFYCFCTAEELEQMRAEQQARGETPRYDGRALLLSAEEVQRRLDAGEPHVIRMKVPSEGICVVPDMLRGDVEIPWDRMDMQVLMKNDGLPTYFLANVVDDHLMGITHVLRGEEWLPSAPKLIKLYEYFGWEQPKLCYMPLLRNPDKSKLSKRKNPTSVTFYERMGFMPEAMLNYLGRMGWSMPDEREKFSLAEMVEHFDLSRISLGGPIFDIEKLSWLNGQWLRELPVEEFAARLQKWAFNSDYMMKIAPHVQGRVETFSQVAPLGGFFFEGALKLDAKLFESKKLSADQVRQVIQLILWKLESLRQWEKERITGCIQAVVEALELKLRDAMPLMFAAITGQASSVSVLDAMEILGPDLTRYRLRQALDLLGGVSKKENKEWEKLLASIG.

Positions 10 to 20 match the 'HIGH' region motif; it reads PSPTGDPHVGT. A 'KMSKS' region motif is present at residues 251–255; the sequence is KLSKR. Lys-254 is a binding site for ATP.

Belongs to the class-I aminoacyl-tRNA synthetase family. Glutamate--tRNA ligase type 1 subfamily. As to quaternary structure, monomer.

It localises to the cytoplasm. The enzyme catalyses tRNA(Glu) + L-glutamate + ATP = L-glutamyl-tRNA(Glu) + AMP + diphosphate. Catalyzes the attachment of glutamate to tRNA(Glu) in a two-step reaction: glutamate is first activated by ATP to form Glu-AMP and then transferred to the acceptor end of tRNA(Glu). The protein is Glutamate--tRNA ligase of Pseudomonas putida (strain ATCC 700007 / DSM 6899 / JCM 31910 / BCRC 17059 / LMG 24140 / F1).